A 198-amino-acid polypeptide reads, in one-letter code: GTP cyclohydrolase-2 (198 aa).

A GTP-binding site is contributed by 52-56; the sequence is RMHSE. Positions 57, 68, and 70 each coordinate Zn(2+). GTP is bound by residues Q73, 94–96, and T116; that span reads EGR. The active-site Proton acceptor is D128. R130 (nucleophile) is an active-site residue. The GTP site is built by T151 and K156.

The protein belongs to the GTP cyclohydrolase II family. Zn(2+) is required as a cofactor.

The enzyme catalyses GTP + 4 H2O = 2,5-diamino-6-hydroxy-4-(5-phosphoribosylamino)-pyrimidine + formate + 2 phosphate + 3 H(+). It functions in the pathway cofactor biosynthesis; riboflavin biosynthesis; 5-amino-6-(D-ribitylamino)uracil from GTP: step 1/4. Catalyzes the conversion of GTP to 2,5-diamino-6-ribosylamino-4(3H)-pyrimidinone 5'-phosphate (DARP), formate and pyrophosphate. In Vibrio vulnificus (strain CMCP6), this protein is GTP cyclohydrolase-2.